The chain runs to 179 residues: Cell division protein ZapC (179 aa).

It belongs to the ZapC family. In terms of assembly, interacts directly with FtsZ.

It is found in the cytoplasm. Its function is as follows. Contributes to the efficiency of the cell division process by stabilizing the polymeric form of the cell division protein FtsZ. Acts by promoting interactions between FtsZ protofilaments and suppressing the GTPase activity of FtsZ. In Ferrimonas balearica (strain DSM 9799 / CCM 4581 / KCTC 23876 / PAT), this protein is Cell division protein ZapC.